Reading from the N-terminus, the 352-residue chain is Rhodopsin (352 aa).

Residues 1 to 36 lie on the Extracellular side of the membrane; that stretch reads MNGTEGPFFYIPMVNTTGVVRSPYEYPQYYLVNPAA. N-linked (GlcNAc...) asparagine glycans are attached at residues Asn-2 and Asn-15. The chain crosses the membrane as a helical span at residues 37–61; sequence YACLGAYMFFLILVGFPVNFLTLYV. The Cytoplasmic segment spans residues 62–73; it reads TLEHKKLRTPLN. The chain crosses the membrane as a helical span at residues 74 to 96; the sequence is YILLNLAVADLFMVFGGFTTTIY. Over 97-110 the chain is Extracellular; sequence TSMHGYFVLGRLGC. Cys-110 and Cys-187 are oxidised to a cystine. Residues 111–133 traverse the membrane as a helical segment; the sequence is NIEGFFATLGGEIALWSLVVLAI. The 'Ionic lock' involved in activated form stabilization signature appears at 134–136; that stretch reads ERW. The Cytoplasmic portion of the chain corresponds to 134 to 152; sequence ERWVVVCKPISNFRFGENH. Residues 153 to 173 form a helical membrane-spanning segment; it reads AIMGVAFTWFMASACAVPPLV. The Extracellular portion of the chain corresponds to 174 to 202; the sequence is GWSRYIPEGMQCSCGIDYYTRAEGFNNES. Residue Asn-200 is glycosylated (N-linked (GlcNAc...) asparagine). A helical transmembrane segment spans residues 203–224; sequence FVIYMFTVHFCIPLAVVGFCYG. The Cytoplasmic segment spans residues 225–252; sequence RLLCAVKEAAAAQQESETTQRAEREVSR. A helical membrane pass occupies residues 253-274; sequence MVVIMVIGFLVCWLPYASVAWY. The Extracellular segment spans residues 275–286; the sequence is IFTHQGSEFGPL. The chain crosses the membrane as a helical span at residues 287–308; sequence FMTIPAFFAKSSSIYNPMIYIC. Residue Lys-296 is modified to N6-(retinylidene)lysine. The Cytoplasmic portion of the chain corresponds to 309–352; the sequence is MNKQFRHCMITTLCCGKNPFEEEEGASTTKTEASSVSSSSVSPA. Residues Cys-322 and Cys-323 are each lipidated (S-palmitoyl cysteine). The interval 331–352 is disordered; the sequence is EEGASTTKTEASSVSSSSVSPA. The span at 342-352 shows a compositional bias: low complexity; the sequence is SSVSSSSVSPA.

This sequence belongs to the G-protein coupled receptor 1 family. Opsin subfamily. In terms of processing, phosphorylated on some or all of the serine and threonine residues present in the C-terminal region. Post-translationally, contains one covalently linked retinal chromophore.

It is found in the membrane. The protein resides in the cell projection. Its subcellular location is the cilium. The protein localises to the photoreceptor outer segment. Photoreceptor required for image-forming vision at low light intensity. While most salt water fish species use retinal as chromophore, most freshwater fish use 3-dehydroretinal, or a mixture of retinal and 3-dehydroretinal. Light-induced isomerization of 11-cis to all-trans retinal triggers a conformational change that activates signaling via G-proteins. Subsequent receptor phosphorylation mediates displacement of the bound G-protein alpha subunit by arrestin and terminates signaling. The sequence is that of Rhodopsin (rho) from Gobius niger (Black goby).